A 343-amino-acid polypeptide reads, in one-letter code: Calcium/calmodulin-dependent protein kinase type 1B (343 aa).

A Protein kinase domain is found at 15-270 (YEIREKLGSG…CQQALQHLWI (256 aa)). Residues 21-29 (LGSGAFSEV) and Lys44 each bind ATP. Asp136 (proton acceptor) is an active-site residue. Positions 290-311 (KNFARTHWKRAFNATSFLRHIR) are calmodulin-binding. The segment at 314–343 (GQSPEGEEASRQGMTRHSHPGLGTSQSPKW) is disordered. Ser338 carries the post-translational modification Phosphoserine.

This sequence belongs to the protein kinase superfamily. CAMK Ser/Thr protein kinase family. CaMK subfamily. Post-translationally, isoform 1 and isoform 2 are phosphorylated by CAMKK1. In terms of tissue distribution, isoform 1 is expressed in liver, heart, lung, kidney, spleen and testis. Isoform 2 is predominantly expressed in cerebrum and cerebellum.

Its subcellular location is the cytoplasm. The protein localises to the nucleus. It catalyses the reaction L-seryl-[protein] + ATP = O-phospho-L-seryl-[protein] + ADP + H(+). It carries out the reaction L-threonyl-[protein] + ATP = O-phospho-L-threonyl-[protein] + ADP + H(+). Its activity is regulated as follows. Activated by Ca(2+)/calmodulin. Must be phosphorylated to be maximally active. Activated by CAMKK1. Its function is as follows. Calcium/calmodulin-dependent protein kinase belonging to a proposed calcium-triggered signaling cascade. In vitro, isoform 1 and isoform 2 phosphorylate CREB1, SYN1/synapsin I. Phosphorylates and activates CAMK1. In Rattus norvegicus (Rat), this protein is Calcium/calmodulin-dependent protein kinase type 1B (Pnck).